The chain runs to 145 residues: NADH-quinone oxidoreductase subunit A (145 aa).

Helical transmembrane passes span 14–34, 66–86, and 96–116; these read FAVF…GGFL, FYLV…LYAW, and VGFI…VYLV.

This sequence belongs to the complex I subunit 3 family. As to quaternary structure, NDH-1 is composed of 13 different subunits. Subunits NuoA, H, J, K, L, M, N constitute the membrane sector of the complex.

Its subcellular location is the cell inner membrane. The catalysed reaction is a quinone + NADH + 5 H(+)(in) = a quinol + NAD(+) + 4 H(+)(out). Its function is as follows. NDH-1 shuttles electrons from NADH, via FMN and iron-sulfur (Fe-S) centers, to quinones in the respiratory chain. The immediate electron acceptor for the enzyme in this species is believed to be ubiquinone. Couples the redox reaction to proton translocation (for every two electrons transferred, four hydrogen ions are translocated across the cytoplasmic membrane), and thus conserves the redox energy in a proton gradient. This is NADH-quinone oxidoreductase subunit A from Sodalis glossinidius (strain morsitans).